We begin with the raw amino-acid sequence, 337 residues long: S-adenosylmethionine:tRNA ribosyltransferase-isomerase (337 aa).

It belongs to the QueA family. Monomer.

The protein localises to the cytoplasm. The enzyme catalyses 7-aminomethyl-7-carbaguanosine(34) in tRNA + S-adenosyl-L-methionine = epoxyqueuosine(34) in tRNA + adenine + L-methionine + 2 H(+). It participates in tRNA modification; tRNA-queuosine biosynthesis. Functionally, transfers and isomerizes the ribose moiety from AdoMet to the 7-aminomethyl group of 7-deazaguanine (preQ1-tRNA) to give epoxyqueuosine (oQ-tRNA). This chain is S-adenosylmethionine:tRNA ribosyltransferase-isomerase, found in Legionella pneumophila subsp. pneumophila (strain Philadelphia 1 / ATCC 33152 / DSM 7513).